Consider the following 158-residue polypeptide: Rhombotin-2 (158 aa).

LIM zinc-binding domains are found at residues 30 to 89 (CGGC…RLFG) and 94 to 153 (CASC…EWTK).

In terms of assembly, interacts via its LIM domains with ELF2 and LDB1. Also interacts with basic helix-loop-helix protein TAL1/SCL and can assemble in a complex with LMO2 and TAL1/SCL. Interacts with BEX2 and KDM5A.

It is found in the nucleus. Acts with TAL1/SCL to regulate red blood cell development. Also acts with LDB1 to maintain erythroid precursors in an immature state. The chain is Rhombotin-2 (LMO2) from Homo sapiens (Human).